A 326-amino-acid chain; its full sequence is Apoptosis facilitator Bcl-2-like protein 14 (326 aa).

S44 is modified (phosphoserine). Positions 99–127 (TEKEEEPPSSPKEIHAQGPFPVERQGRNQ) are disordered. The BH3 signature appears at 211–225 (IVELLKYSGDQLGRE). A BH2 motif is present at residues 307 to 314 (WVQQNGGW).

It belongs to the Bcl-2 family. Phosphorylated by MELK, leading to inhibit its pro-apoptotic function.

Its subcellular location is the cytoplasm. Its function is as follows. Plays a role in apoptosis. The protein is Apoptosis facilitator Bcl-2-like protein 14 (Bcl2l14) of Rattus norvegicus (Rat).